We begin with the raw amino-acid sequence, 239 residues long: Phosphoribosylaminoimidazole-succinocarboxamide synthase (239 aa).

Belongs to the SAICAR synthetase family.

It carries out the reaction 5-amino-1-(5-phospho-D-ribosyl)imidazole-4-carboxylate + L-aspartate + ATP = (2S)-2-[5-amino-1-(5-phospho-beta-D-ribosyl)imidazole-4-carboxamido]succinate + ADP + phosphate + 2 H(+). The protein operates within purine metabolism; IMP biosynthesis via de novo pathway; 5-amino-1-(5-phospho-D-ribosyl)imidazole-4-carboxamide from 5-amino-1-(5-phospho-D-ribosyl)imidazole-4-carboxylate: step 1/2. The sequence is that of Phosphoribosylaminoimidazole-succinocarboxamide synthase from Psychrobacter sp. (strain PRwf-1).